The following is a 108-amino-acid chain: Large ribosomal subunit protein uL23 (108 aa).

The protein belongs to the universal ribosomal protein uL23 family. As to quaternary structure, part of the 50S ribosomal subunit. Contacts protein L29, and trigger factor when it is bound to the ribosome.

Its function is as follows. One of the early assembly proteins it binds 23S rRNA. One of the proteins that surrounds the polypeptide exit tunnel on the outside of the ribosome. Forms the main docking site for trigger factor binding to the ribosome. The polypeptide is Large ribosomal subunit protein uL23 (Polaromonas sp. (strain JS666 / ATCC BAA-500)).